The sequence spans 896 residues: Translation initiation factor IF-2 (896 aa).

Basic and acidic residues-rich tracts occupy residues 94–159 and 166–219; these read KRDP…KDKV and DMTK…EKNW. The interval 94–307 is disordered; that stretch reads KRDPQEAERL…GSALQQGFQK (214 aa). Positions 256-271 are enriched in basic residues; sequence GRGRNAKAARPAKKGN. Over residues 272 to 285 the composition is skewed to basic and acidic residues; sequence KHAESKADREEARA. In terms of domain architecture, tr-type G spans 395–564; the sequence is PRAPVVTIMG…LLQAEVLELK (170 aa). Positions 404-411 are G1; that stretch reads GHVDHGKT. Position 404-411 (404-411) interacts with GTP; it reads GHVDHGKT. Positions 429-433 are G2; the sequence is GITQH. Positions 450–453 are G3; that stretch reads DTPG. GTP-binding positions include 450–454 and 504–507; these read DTPGH and NKID. The interval 504 to 507 is G4; sequence NKID. The G5 stretch occupies residues 540–542; the sequence is SAK.

This sequence belongs to the TRAFAC class translation factor GTPase superfamily. Classic translation factor GTPase family. IF-2 subfamily.

The protein localises to the cytoplasm. In terms of biological role, one of the essential components for the initiation of protein synthesis. Protects formylmethionyl-tRNA from spontaneous hydrolysis and promotes its binding to the 30S ribosomal subunits. Also involved in the hydrolysis of GTP during the formation of the 70S ribosomal complex. This is Translation initiation factor IF-2 (infB) from Klebsiella oxytoca.